A 146-amino-acid polypeptide reads, in one-letter code: Hut operon positive regulatory protein (146 aa).

Belongs to the HutP family. As to quaternary structure, homohexamer.

Antiterminator that binds to cis-acting regulatory sequences on the mRNA in the presence of histidine, thereby suppressing transcription termination and activating the hut operon for histidine utilization. In Bacillus cereus (strain AH820), this protein is Hut operon positive regulatory protein.